Consider the following 432-residue polypeptide: Glutamyl-tRNA reductase (432 aa).

Residues 49 to 52 (TCNR), serine 101, 106 to 108 (EPQ), and glutamine 112 each bind substrate. Cysteine 50 functions as the Nucleophile in the catalytic mechanism. 181–186 (GAGETI) is a binding site for NADP(+). A disordered region spans residues 407 to 432 (FPEKPGYQHPPIATPIVRTDDADPAP).

It belongs to the glutamyl-tRNA reductase family. In terms of assembly, homodimer.

The enzyme catalyses (S)-4-amino-5-oxopentanoate + tRNA(Glu) + NADP(+) = L-glutamyl-tRNA(Glu) + NADPH + H(+). It functions in the pathway porphyrin-containing compound metabolism; protoporphyrin-IX biosynthesis; 5-aminolevulinate from L-glutamyl-tRNA(Glu): step 1/2. Its function is as follows. Catalyzes the NADPH-dependent reduction of glutamyl-tRNA(Glu) to glutamate 1-semialdehyde (GSA). The chain is Glutamyl-tRNA reductase from Xanthomonas oryzae pv. oryzae (strain PXO99A).